A 186-amino-acid polypeptide reads, in one-letter code: Membrane protein Rv1476 (186 aa).

The chain crosses the membrane as a helical span at residues 138–158 (FPWSALTIVLLIGVLAAAVGA). The disordered stretch occupies residues 166–186 (RRSATSTDAAPGAGDDLNQGV).

It is found in the membrane. Its function is as follows. May affect the expression of genes linked to host macrophage apoptosis and immune response, thereby promoting the survival of M.tuberculosis in host macrophages. Overexpression of the gene increases susceptibility of the bacteria to various stresses, but promotes intracellular survival in host macrophages. It has no impact on the growth rate in vitro. Overexpression causes changes in the transcriptome of THP-1 cells, including expression of genes involved in cell proliferation, fatty acid degradation, cytokine-cytokine receptor interaction and immune response pathways. The protein is Membrane protein Rv1476 of Mycobacterium tuberculosis (strain ATCC 25618 / H37Rv).